The chain runs to 382 residues: D-galactonate dehydratase (382 aa).

D183 is a binding site for Mg(2+). H185 acts as the Proton donor in catalysis. Positions 209 and 235 each coordinate Mg(2+). H285 (proton acceptor) is an active-site residue. The disordered stretch occupies residues 361-382 (NENPPDWRNPVWRHSDGSIAEW).

This sequence belongs to the mandelate racemase/muconate lactonizing enzyme family. GalD subfamily. Requires Mg(2+) as cofactor.

It catalyses the reaction D-galactonate = 2-dehydro-3-deoxy-D-galactonate + H2O. The protein operates within carbohydrate acid metabolism; D-galactonate degradation; D-glyceraldehyde 3-phosphate and pyruvate from D-galactonate: step 1/3. In terms of biological role, catalyzes the dehydration of D-galactonate to 2-keto-3-deoxy-D-galactonate. The polypeptide is D-galactonate dehydratase (Xanthomonas oryzae pv. oryzae (strain MAFF 311018)).